We begin with the raw amino-acid sequence, 124 residues long: Small ribosomal subunit protein bS6 (124 aa).

The span at 105 to 115 shows a compositional bias: basic and acidic residues; it reads EVQHEEARKSA. The segment at 105–124 is disordered; it reads EVQHEEARKSAQSDAPVAAA.

This sequence belongs to the bacterial ribosomal protein bS6 family.

Binds together with bS18 to 16S ribosomal RNA. The sequence is that of Small ribosomal subunit protein bS6 from Polynucleobacter necessarius subsp. necessarius (strain STIR1).